The following is a 468-amino-acid chain: Probable acid phosphatase DIA3 (468 aa).

A signal peptide spans Met1–Ser20. His76 (nucleophile) is an active-site residue. Residues Asn98, Asn163, Asn193, Asn202, Asn238, Asn251, and Asn316 are each glycosylated (N-linked (GlcNAc...) asparagine). Catalysis depends on Asp339, which acts as the Proton donor. N-linked (GlcNAc...) asparagine glycans are attached at residues Asn357, Asn391, Asn457, and Asn462.

It belongs to the histidine acid phosphatase family.

It catalyses the reaction a phosphate monoester + H2O = an alcohol + phosphate. This chain is Probable acid phosphatase DIA3 (DIA3), found in Saccharomyces cerevisiae (strain ATCC 204508 / S288c) (Baker's yeast).